A 124-amino-acid polypeptide reads, in one-letter code: Small ribosomal subunit protein uS12 (124 aa).

The residue at position 89 (Asp89) is a 3-methylthioaspartic acid.

The protein belongs to the universal ribosomal protein uS12 family. Part of the 30S ribosomal subunit. Contacts proteins S8 and S17. May interact with IF1 in the 30S initiation complex.

With S4 and S5 plays an important role in translational accuracy. Functionally, interacts with and stabilizes bases of the 16S rRNA that are involved in tRNA selection in the A site and with the mRNA backbone. Located at the interface of the 30S and 50S subunits, it traverses the body of the 30S subunit contacting proteins on the other side and probably holding the rRNA structure together. The combined cluster of proteins S8, S12 and S17 appears to hold together the shoulder and platform of the 30S subunit. This chain is Small ribosomal subunit protein uS12, found in Nitratiruptor sp. (strain SB155-2).